Consider the following 339-residue polypeptide: Large ribosomal subunit protein uL10 (339 aa).

Residues 305–339 (TQPQQEEKVEEAEEEEEEEEASEEDALAGLGALFG) form a disordered region. Residues 312-330 (KVEEAEEEEEEEEASEEDA) are compositionally biased toward acidic residues.

The protein belongs to the universal ribosomal protein uL10 family. Part of the 50S ribosomal subunit. Forms part of the ribosomal stalk which helps the ribosome interact with GTP-bound translation factors. Forms a heptameric L10(L12)2(L12)2(L12)2 complex, where L10 forms an elongated spine to which the L12 dimers bind in a sequential fashion.

Its function is as follows. Forms part of the ribosomal stalk, playing a central role in the interaction of the ribosome with GTP-bound translation factors. This chain is Large ribosomal subunit protein uL10, found in Thermococcus onnurineus (strain NA1).